Consider the following 108-residue polypeptide: Nucleoid-associated protein BP1550 (108 aa).

The segment at 87–108 (SQEKMASVTAGMPLPPGMKLPF) is disordered. Positions 99-108 (PLPPGMKLPF) are enriched in pro residues.

The protein belongs to the YbaB/EbfC family. In terms of assembly, homodimer.

It is found in the cytoplasm. It localises to the nucleoid. In terms of biological role, binds to DNA and alters its conformation. May be involved in regulation of gene expression, nucleoid organization and DNA protection. In Bordetella pertussis (strain Tohama I / ATCC BAA-589 / NCTC 13251), this protein is Nucleoid-associated protein BP1550.